The chain runs to 228 residues: 7-cyano-7-deazaguanine synthase (228 aa).

9-19 is a binding site for ATP; sequence LSGGPDSTTVL. 4 residues coordinate Zn(2+): Cys193, Cys203, Cys206, and Cys209.

The protein belongs to the QueC family. Zn(2+) serves as cofactor.

It catalyses the reaction 7-carboxy-7-deazaguanine + NH4(+) + ATP = 7-cyano-7-deazaguanine + ADP + phosphate + H2O + H(+). It participates in purine metabolism; 7-cyano-7-deazaguanine biosynthesis. Functionally, catalyzes the ATP-dependent conversion of 7-carboxy-7-deazaguanine (CDG) to 7-cyano-7-deazaguanine (preQ(0)). This Rickettsia rickettsii (strain Iowa) protein is 7-cyano-7-deazaguanine synthase.